A 365-amino-acid polypeptide reads, in one-letter code: 3-galactosyl-N-acetylglucosaminide 4-alpha-L-fucosyltransferase FUT3 (365 aa).

Over M1–H15 the chain is Cytoplasmic. A helical; Signal-anchor for type II membrane protein membrane pass occupies residues C16 to L34. Topologically, residues R35 to Q365 are lumenal. N-linked (GlcNAc...) asparagine glycans are attached at residues N100, N158, and N189.

The protein belongs to the glycosyltransferase 10 family. Glycosylated. In terms of tissue distribution, liver, kidney, lung and brain.

Its subcellular location is the golgi apparatus. The protein localises to the golgi stack membrane. It catalyses the reaction a beta-D-galactosyl-(1-&gt;3)-N-acetyl-beta-D-glucosaminyl derivative + GDP-beta-L-fucose = a beta-D-galactosyl-(1-&gt;3)-[alpha-L-fucosyl-(1-&gt;4)]-N-acetyl-beta-D-glucosaminyl derivative + GDP + H(+). The catalysed reaction is an N-acetyl-alpha-neuraminyl-(2-&gt;3)-beta-D-galactosyl-(1-&gt;4)-N-acetyl-beta-D-glucosaminyl derivative + GDP-beta-L-fucose = an alpha-Neu5Ac-(2-&gt;3)-beta-D-Gal-(1-&gt;4)-[alpha-L-Fuc-(1-&gt;3)]-beta-D-GlcNAc derivative + GDP + H(+). It carries out the reaction a beta-D-galactosyl-(1-&gt;4)-N-acetyl-beta-D-glucosaminyl derivative + GDP-beta-L-fucose = a beta-D-galactosyl-(1-&gt;4)-[alpha-L-fucosyl-(1-&gt;3)]-N-acetyl-beta-D-glucosaminyl derivative + GDP + H(+). The enzyme catalyses an alpha-Neu5Ac-(2-&gt;3)-beta-D-Gal-(1-&gt;4)-beta-D-GlcNAc-(1-&gt;3)-beta-D-Gal-(1-&gt;4)-[alpha-L-Fuc-(1-&gt;3)]-beta-D-GlcNAc derivative + GDP-beta-L-fucose = an alpha-Neu5Ac-(2-&gt;3)-beta-D-Gal-(1-&gt;4)-[alpha-L-Fuc-(1-&gt;3)]-beta-D-GlcNAc-(1-&gt;3)-beta-D-Gal-(1-&gt;4)-[alpha-L-Fuc-(1-&gt;3)]-beta-D-GlcNAc derivative + GDP + H(+). It catalyses the reaction Lc4Cer + GDP-beta-L-fucose = a lactoside III(4)-a-Fuc-Lc4Cer + GDP + H(+). The catalysed reaction is a beta-D-Gal-(1-&gt;3)-beta-D-GlcNAc-(1-&gt;3)-beta-D-Gal-(1-&gt;4)-beta-D-Glc-(1&lt;-&gt;1')-Cer(d18:1(4E)) + GDP-beta-L-fucose = a III(4)-a-Fuc-Lc4Cer(d18:1(4E)) + GDP + H(+). It carries out the reaction N-acetyl-alpha-neuraminosyl-(2-&gt;3)-beta-D-galactosyl-(1-&gt;3)-[N-acetyl-alpha-neuraminosyl-(2-&gt;6)]-N-acetyl-beta-D-glucosaminyl-(1-&gt;3)-beta-D-galactosyl-(1-&gt;4)-beta-D-glucosyl-(1&lt;-&gt;1')-N-acyl-sphing-4-enine + GDP-beta-L-fucose = N-acetyl-alpha-neuraminosyl-(2-&gt;3)-beta-D-galactosyl-(1-&gt;3)-alpha-L-fucosyl-(1-&gt;4)-[N-acetyl-alpha-neuraminosyl-(2-&gt;6)-N-acetyl-beta-D-glucosaminyl-(1-&gt;3)]-beta-D-galactosyl-(1-&gt;4)-beta-D-glucosyl-(1&lt;-&gt;1')-N-acyl-sphing-4-enine + GDP + H(+). The enzyme catalyses N-acetyl-alpha-neuraminosyl-(2-&gt;3)-beta-D-galactosyl-(1-&gt;3)-N-acetyl-beta-D-glucosaminyl-(1-&gt;3)-beta-D-galactosyl-(1-&gt;4)-beta-D-glucosyl-(1&lt;-&gt;1')-N-acyl-sphing-4-enine + GDP-beta-L-fucose = N-acetyl-alpha-neuraminosyl-(2-&gt;3)-beta-D-galactosyl-(1-&gt;3)-alpha-L-fucosyl-(1-&gt;4)-[N-acetyl-beta-D-glucosaminyl-(1-&gt;3)]-beta-D-galactosyl-(1-&gt;4)-beta-D-glucosyl-(1&lt;-&gt;1')-N-acyl-sphing-4-enine + GDP + H(+). It catalyses the reaction beta-D-galactosyl-(1-&gt;3)-N-acetyl-D-glucosamine + GDP-beta-L-fucose = beta-D-galactosyl-(1-&gt;3)-[alpha-L-fucosyl-(1-&gt;4)]-N-acetyl-D-glucosamine + GDP + H(+). The catalysed reaction is alpha-L-Fuc-(1-&gt;2)-beta-D-Gal-(1-&gt;3)-D-GlcNAc + GDP-beta-L-fucose = alpha-L-Fuc-(1-&gt;2)-beta-D-Gal-(1-&gt;3)-[alpha-L-Fuc-(1-&gt;4)]-D-GlcNAc + GDP + H(+). It carries out the reaction alpha-L-Fuc-(1-&gt;2)-beta-D-Gal-(1-&gt;4)-D-GlcNAc + GDP-beta-L-fucose = alpha-L-Fuc-(1-&gt;2)-beta-D-Gal-(1-&gt;4)-[alpha-L-Fuc-(1-&gt;3)]-D-GlcNAc + GDP + H(+). The enzyme catalyses beta-D-galactosyl-(1-&gt;4)-N-acetyl-D-glucosamine + GDP-beta-L-fucose = beta-D-galactosyl-(1-&gt;4)-[alpha-L-fucosyl-(1-&gt;3)]-N-acetyl-D-glucosamine + GDP + H(+). It catalyses the reaction lactose + GDP-beta-L-fucose = beta-D-galactosyl-(1-&gt;4)-[alpha-L-fucosyl-(1-&gt;3)]-D-glucose + GDP + H(+). The catalysed reaction is an alpha-Neu5Ac-(2-&gt;3)-beta-D-Gal-(1-&gt;3)-D-GlcNAc derivative + GDP-beta-L-fucose = an alpha-Neu5Ac-(2-&gt;3)-beta-D-Gal-(1-&gt;3)-[alpha-L-Fuc-(1-&gt;4)]-beta-D-GlcNAc derivative + GDP + H(+). It functions in the pathway protein modification; protein glycosylation. Functionally, catalyzes the transfer of L-fucose, from a guanosine diphosphate-beta-L-fucose, to both the subterminal N-acetyl glucosamine (GlcNAc) of type 1 chain (beta-D-Gal-(1-&gt;3)-beta-D-GlcNAc) glycolipids and oligosaccharides via an alpha(1,4) linkage, and the subterminal glucose (Glc) or GlcNAc of type 2 chain (beta-D-Gal-(1-&gt;4)-beta-D-GlcNAc) oligosaccharides via an alpha(1,3) linkage, independently of the presence of terminal alpha-L-fucosyl-(1,2) moieties on the terminal galactose of these acceptors and participates in the blood groups Lewis determination and expression of Lewis a (Le(a)), lewis b (Le(b)), Lewis x/SSEA-1 (Le(x)) and lewis y (Le(y)) antigens. Also catalyzes the transfer of L-fucose to subterminal GlcNAc of sialyl- and disialyl-lactotetraosylceramide to produce sialyl Lewis a (sLe(a)) and disialyl Lewis a via an alpha(1,4) linkage and therefore may regulate cell surface sialyl Lewis a expression and consequently regulates adhesive properties to E-selectin, cell proliferation and migration. Catalyzes the transfer of an L-fucose to 3'-sialyl-N-acetyllactosamine by an alpha(1,3) linkage, which allows the formation of sialyl-Lewis x structure and therefore may regulate the sialyl-Lewis x surface antigen expression and consequently adhesive properties to E-selectin. Prefers type 1 chain over type 2 acceptors. Type 1 tetrasaccharide is a better acceptor than type 1 disaccharide suggesting that a beta anomeric configuration of GlcNAc in the substrate is preferred. Lewis-positive (Le(+)) individuals have an active enzyme while Lewis-negative (Le(-)) individuals have an inactive enzyme. In Bos taurus (Bovine), this protein is 3-galactosyl-N-acetylglucosaminide 4-alpha-L-fucosyltransferase FUT3.